The sequence spans 459 residues: Cysteine--tRNA ligase (459 aa).

Cys-28 contacts Zn(2+). Residues 30-40 carry the 'HIGH' region motif; that stretch reads VTVYDLCHIGH. The Zn(2+) site is built by Cys-209, His-234, and Glu-238. A 'KMSKS' region motif is present at residues 266-270; the sequence is KMSKS. Lys-269 lines the ATP pocket.

This sequence belongs to the class-I aminoacyl-tRNA synthetase family. Monomer. It depends on Zn(2+) as a cofactor.

Its subcellular location is the cytoplasm. The catalysed reaction is tRNA(Cys) + L-cysteine + ATP = L-cysteinyl-tRNA(Cys) + AMP + diphosphate. The protein is Cysteine--tRNA ligase of Shewanella oneidensis (strain ATCC 700550 / JCM 31522 / CIP 106686 / LMG 19005 / NCIMB 14063 / MR-1).